A 363-amino-acid chain; its full sequence is Cobalt-precorrin-5B C(1)-methyltransferase (363 aa).

It belongs to the CbiD family.

It carries out the reaction Co-precorrin-5B + S-adenosyl-L-methionine = Co-precorrin-6A + S-adenosyl-L-homocysteine. It functions in the pathway cofactor biosynthesis; adenosylcobalamin biosynthesis; cob(II)yrinate a,c-diamide from sirohydrochlorin (anaerobic route): step 6/10. In terms of biological role, catalyzes the methylation of C-1 in cobalt-precorrin-5B to form cobalt-precorrin-6A. In Treponema denticola (strain ATCC 35405 / DSM 14222 / CIP 103919 / JCM 8153 / KCTC 15104), this protein is Cobalt-precorrin-5B C(1)-methyltransferase.